Here is a 343-residue protein sequence, read N- to C-terminus: Cytoplasmic tRNA 2-thiolation protein 1 (343 aa).

This sequence belongs to the TtcA family. CTU1/NCS6/ATPBD3 subfamily.

The protein localises to the cytoplasm. It functions in the pathway tRNA modification; 5-methoxycarbonylmethyl-2-thiouridine-tRNA biosynthesis. Its function is as follows. Plays a central role in 2-thiolation of mcm(5)S(2)U at tRNA wobble positions of tRNA(Lys), tRNA(Glu) and tRNA(Gln). Directly binds tRNAs and probably acts by catalyzing adenylation of tRNAs, an intermediate required for 2-thiolation. It is unclear whether it acts as a sulfurtransferase that transfers sulfur from thiocarboxylated URM1 onto the uridine of tRNAs at wobble position. This is Cytoplasmic tRNA 2-thiolation protein 1 from Drosophila ananassae (Fruit fly).